Here is a 255-residue protein sequence, read N- to C-terminus: Homeobox protein Hox-D4 (255 aa).

A disordered region spans residues 31–128 (EQGADYYGGG…KQPPPGTALK (98 aa)). Over residues 94–109 (EPCPAPPAPPPAPLPG) the composition is skewed to pro residues. The Antp-type hexapeptide signature appears at 133–138 (VYPWMK). The homeobox DNA-binding region spans 154–213 (PKRSRTAYTRQQVLELEKEFHFNRYLTRRRRIEIAHTLCLSERQIKIWFQNRRMKWKKDH). A disordered region spans residues 212-255 (DHKLPNTKGRSSSSSSSSSCSSSVAPSQHLQPMAKDHHTDLTTL). The segment covering 222-234 (SSSSSSSSSCSSS) has biased composition (low complexity). Basic and acidic residues predominate over residues 245–255 (AKDHHTDLTTL).

It belongs to the Antp homeobox family. Deformed subfamily. Forms a DNA-binding heterodimer with transcription factor PBX1.

The protein resides in the nucleus. In terms of biological role, sequence-specific transcription factor which is part of a developmental regulatory system that provides cells with specific positional identities on the anterior-posterior axis. This chain is Homeobox protein Hox-D4 (HOXD4), found in Gorilla gorilla gorilla (Western lowland gorilla).